We begin with the raw amino-acid sequence, 390 residues long: Flavohemoprotein (390 aa).

Serine 2 carries the post-translational modification N-acetylserine. Positions 12–149 (PLTPTEINFL…LAQTLIDAEA (138 aa)) constitute a Globin domain. Histidine 96 is a heme b binding site. Catalysis depends on charge relay system residues tyrosine 106 and glutamate 148. Residues 157–390 (WEEFKDFRVT…EFFGPTDPDC (234 aa)) form a reductase region. Residues 158-263 (EEFKDFRVTK…HAPVGTMKYD (106 aa)) enclose the FAD-binding FR-type domain. FAD contacts are provided by residues tyrosine 196 and 214-217 (REYS). 277–282 (GIGITP) is an NADP(+) binding site. Position 382 to 385 (382 to 385 (FFGP)) interacts with FAD.

Belongs to the globin family. Two-domain flavohemoproteins subfamily. It in the C-terminal section; belongs to the flavoprotein pyridine nucleotide cytochrome reductase family. Requires FAD as cofactor. The cofactor is heme b.

The protein resides in the cytoplasm. The enzyme catalyses 2 nitric oxide + NADPH + 2 O2 = 2 nitrate + NADP(+) + H(+). It catalyses the reaction 2 nitric oxide + NADH + 2 O2 = 2 nitrate + NAD(+) + H(+). Is involved in NO detoxification in an aerobic process, termed nitric oxide dioxygenase (NOD) reaction that utilizes O(2) and NAD(P)H to convert NO to nitrate, which protects the fungus from various noxious nitrogen compounds. Therefore, plays a central role in the inducible response to nitrosative stress. Its function is as follows. In the presence of oxygen and NADH, it has NADH oxidase activity, which leads to the generation of superoxide and H(2)O(2). Under anaerobic conditions, it also exhibits nitric oxide reductase and FAD reductase activities. However, all these reactions are much lower than NOD activity. This chain is Flavohemoprotein, found in Candida norvegensis (Yeast).